The chain runs to 205 residues: Holliday junction branch migration complex subunit RuvA (205 aa).

The interval 1–64 (MIGKLKGLID…EDQIKLFGFR (64 aa)) is domain I. Residues 65 to 143 (SDLEREWFRL…AFASVDPAVV (79 aa)) are domain II. The tract at residues 144–153 (ALSGALDERS) is flexible linker. The interval 153–205 (SAPRPVTDAISALVNLGYGQPQAAAAIASASRSAGEGAETAQLIKLGLKELSK) is domain III.

The protein belongs to the RuvA family. Homotetramer. Forms an RuvA(8)-RuvB(12)-Holliday junction (HJ) complex. HJ DNA is sandwiched between 2 RuvA tetramers; dsDNA enters through RuvA and exits via RuvB. An RuvB hexamer assembles on each DNA strand where it exits the tetramer. Each RuvB hexamer is contacted by two RuvA subunits (via domain III) on 2 adjacent RuvB subunits; this complex drives branch migration. In the full resolvosome a probable DNA-RuvA(4)-RuvB(12)-RuvC(2) complex forms which resolves the HJ.

The protein localises to the cytoplasm. In terms of biological role, the RuvA-RuvB-RuvC complex processes Holliday junction (HJ) DNA during genetic recombination and DNA repair, while the RuvA-RuvB complex plays an important role in the rescue of blocked DNA replication forks via replication fork reversal (RFR). RuvA specifically binds to HJ cruciform DNA, conferring on it an open structure. The RuvB hexamer acts as an ATP-dependent pump, pulling dsDNA into and through the RuvAB complex. HJ branch migration allows RuvC to scan DNA until it finds its consensus sequence, where it cleaves and resolves the cruciform DNA. The polypeptide is Holliday junction branch migration complex subunit RuvA (Rhodopseudomonas palustris (strain BisB18)).